The sequence spans 348 residues: Zinc-type alcohol dehydrogenase-like protein C2E1P3.01 (348 aa).

Belongs to the zinc-containing alcohol dehydrogenase family. Quinone oxidoreductase subfamily.

It localises to the mitochondrion. This chain is Zinc-type alcohol dehydrogenase-like protein C2E1P3.01, found in Schizosaccharomyces pombe (strain 972 / ATCC 24843) (Fission yeast).